The chain runs to 487 residues: Cytochrome P450 2C16 (487 aa).

Cysteine 432 is a heme binding site.

Belongs to the cytochrome P450 family. Heme is required as a cofactor. Expressed constitutively in liver, lung, testes, and kidney.

It localises to the endoplasmic reticulum membrane. It is found in the microsome membrane. It catalyses the reaction an organic molecule + reduced [NADPH--hemoprotein reductase] + O2 = an alcohol + oxidized [NADPH--hemoprotein reductase] + H2O + H(+). Functionally, cytochromes P450 are a group of heme-thiolate monooxygenases. In liver microsomes, this enzyme is involved in an NADPH-dependent electron transport pathway. It oxidizes a variety of structurally unrelated compounds, including steroids, fatty acids, and xenobiotics. The sequence is that of Cytochrome P450 2C16 (CYP2C16) from Oryctolagus cuniculus (Rabbit).